The following is a 541-amino-acid chain: Chaperonin GroEL (541 aa).

ATP-binding positions include 29–32 (TLGP), 86–90 (DGTTT), G413, 477–479 (DAL), and D493.

This sequence belongs to the chaperonin (HSP60) family. As to quaternary structure, forms a cylinder of 14 subunits composed of two heptameric rings stacked back-to-back. Interacts with the co-chaperonin GroES.

It is found in the cytoplasm. It catalyses the reaction ATP + H2O + a folded polypeptide = ADP + phosphate + an unfolded polypeptide.. Together with its co-chaperonin GroES, plays an essential role in assisting protein folding. The GroEL-GroES system forms a nano-cage that allows encapsulation of the non-native substrate proteins and provides a physical environment optimized to promote and accelerate protein folding. The chain is Chaperonin GroEL from Clostridium botulinum (strain Loch Maree / Type A3).